The primary structure comprises 519 residues: Aspartokinase (519 aa).

A Phosphoserine modification is found at serine 326. Residue threonine 328 is modified to Phosphothreonine. One can recognise an ACT domain in the interval 436–518 (LVGKHMRNTT…MLVEKPWLYS (83 aa)).

It belongs to the aspartokinase family.

The catalysed reaction is L-aspartate + ATP = 4-phospho-L-aspartate + ADP. Its pathway is amino-acid biosynthesis; L-methionine biosynthesis via de novo pathway; L-homoserine from L-aspartate: step 1/3. It participates in amino-acid biosynthesis; L-threonine biosynthesis; L-threonine from L-aspartate: step 1/5. Its function is as follows. Phosphorylates aspartate, the first step in the biosynthesis of amino acids that derive from aspartate (the aspartate family of amino acids), including methioinine and threonine, the latter of which is a precursor to isoleucine. This is Aspartokinase from Schizosaccharomyces pombe (strain 972 / ATCC 24843) (Fission yeast).